The sequence spans 135 residues: Small ribosomal subunit protein eS6 (135 aa).

It belongs to the eukaryotic ribosomal protein eS6 family.

This chain is Small ribosomal subunit protein eS6, found in Methanospirillum hungatei JF-1 (strain ATCC 27890 / DSM 864 / NBRC 100397 / JF-1).